Consider the following 201-residue polypeptide: Small ribosomal subunit protein uS4c (201 aa).

The S4 RNA-binding domain maps to 89 to 149 (MRLDNILFRL…DKPKSGALIK (61 aa)).

The protein belongs to the universal ribosomal protein uS4 family. Part of the 30S ribosomal subunit. Contacts protein S5. The interaction surface between S4 and S5 is involved in control of translational fidelity.

It localises to the plastid. In terms of biological role, one of the primary rRNA binding proteins, it binds directly to 16S rRNA where it nucleates assembly of the body of the 30S subunit. With S5 and S12 plays an important role in translational accuracy. This chain is Small ribosomal subunit protein uS4c (rps4), found in Cuscuta exaltata (Tall dodder).